Reading from the N-terminus, the 381-residue chain is MAKIISIIGSTGSIGRQTLEAAKNLGIKVAALSANSNIDLLEKQVHEFKPDVVSVGNSELAKEMSNRLQGFGIEVLWGQDGMKRVVEHSEADTVVTSVVGTAGLIPTIHAIRHKKNIALANKETLVTAGQLVMEDAKKNNVKIFPVDSEHSAIYQCLLGNKDKQVEKIILTASGGPFRGKNIKELKNITPAQALKHPNWSMGNKITIDSATLMNKGLEVIEAKWLFQRDLDSIQVLVHPQSIIHSMVQYVDGSVMAQLGSPDMRIPIQLALTYPDRCQNNFNKLDFLKCPPLTFEEPDIDTFKCLRLAYKSLEIGGTMPAALNAANEIAVAAFLENHIGFTEIAETIEQVMQRHNVNICPCLEDIIEVDCWARTTARQLII.

The NADPH site is built by T11, G12, S13, I14, N37, and N121. Residue K122 coordinates 1-deoxy-D-xylulose 5-phosphate. E123 serves as a coordination point for NADPH. D147 contacts Mn(2+). 1-deoxy-D-xylulose 5-phosphate contacts are provided by S148, E149, S173, and H196. E149 contributes to the Mn(2+) binding site. G202 contributes to the NADPH binding site. Positions 209, 214, 215, and 218 each coordinate 1-deoxy-D-xylulose 5-phosphate. E218 contacts Mn(2+).

Belongs to the DXR family. Mg(2+) serves as cofactor. Mn(2+) is required as a cofactor.

The enzyme catalyses 2-C-methyl-D-erythritol 4-phosphate + NADP(+) = 1-deoxy-D-xylulose 5-phosphate + NADPH + H(+). The protein operates within isoprenoid biosynthesis; isopentenyl diphosphate biosynthesis via DXP pathway; isopentenyl diphosphate from 1-deoxy-D-xylulose 5-phosphate: step 1/6. Catalyzes the NADPH-dependent rearrangement and reduction of 1-deoxy-D-xylulose-5-phosphate (DXP) to 2-C-methyl-D-erythritol 4-phosphate (MEP). This Ruminiclostridium cellulolyticum (strain ATCC 35319 / DSM 5812 / JCM 6584 / H10) (Clostridium cellulolyticum) protein is 1-deoxy-D-xylulose 5-phosphate reductoisomerase.